The following is a 161-amino-acid chain: Epididymal protein 13 (161 aa).

An N-terminal signal peptide occupies residues 1-23 (MHRSEPFLKMSLLILLFLGLAEA). N56 carries N-linked (GlcNAc...) asparagine glycosylation.

It is found in the secreted. This Homo sapiens (Human) protein is Epididymal protein 13.